The sequence spans 1187 residues: DENN domain and WD repeat-containing protein SCD1 (1187 aa).

The 161-residue stretch at 19–179 (TVDGDLGFHG…NVPLPTPGKD (161 aa)) folds into the uDENN domain. The region spanning 199-330 (SLPQADISLQ…EFSTLRNDIL (132 aa)) is the cDENN domain. The dDENN domain maps to 332-437 (LLHPNVVAID…ERRLSSDEKS (106 aa)). Disordered stretches follow at residues 508–536 (SGAL…SSME) and 765–793 (SAGL…GRSW). Basic and acidic residues predominate over residues 526–536 (NTKEDNFSSME). Over residues 779 to 793 (SDETQQPSEASGRSW) the composition is skewed to polar residues. 8 WD repeats span residues 841 to 892 (GHGG…SELR), 897 to 934 (GHTG…LLEE), 937 to 975 (GHDS…CVAT), 978 to 1017 (RCSS…QMHK), 1020 to 1057 (GHTK…CDAV), 1060 to 1099 (CHAG…IKCV), 1104 to 1141 (LHSS…GTKV), and 1152 to 1187 (RTAA…TINI).

In terms of assembly, interacts with FLS2. Expressed in roots, rosette and cauline leaves, buds and flowers.

The protein resides in the cell membrane. Its subcellular location is the cytoplasmic vesicle. The protein localises to the clathrin-coated vesicle. Functionally, involved in growth and development through its role in cytokinesis and polarized cell expansion. Required for plasma membrane internalization. May function in clathrin-mediated membrane trafficking, including plasma membrane endocytosis, essential to both cytokinesis and cell expansion. Acts as a negative regulator of basal resistance against bacteria. The protein is DENN domain and WD repeat-containing protein SCD1 of Arabidopsis thaliana (Mouse-ear cress).